Consider the following 1070-residue polypeptide: [F-actin]-monooxygenase MICAL1 (1070 aa).

The tract at residues methionine 1 to glutamate 489 is monooxygenase domain. FAD-binding positions include cysteine 95, glutamate 114 to arginine 116, arginine 121 to asparagine 123, phenylalanine 181, tyrosine 293, and aspartate 393. A Phosphothreonine modification is found at threonine 475. The Calponin-homology (CH) domain maps to valine 508–lysine 612. The tract at residues glutamine 643–aspartate 690 is disordered. Residues arginine 646–alanine 665 show a composition bias toward basic and acidic residues. Pro residues predominate over residues glutamate 671–proline 684. Residues aspartate 695 to glutamate 757 form the LIM zinc-binding domain. Residues cysteine 697, cysteine 700, histidine 718, cysteine 721, cysteine 724, cysteine 727, cysteine 747, and histidine 750 each contribute to the Zn(2+) site. Disordered regions lie at residues threonine 754–serine 838 and methionine 865–proline 887. The segment covering glycine 755–glutamate 766 has biased composition (basic and acidic residues). Polar residues predominate over residues leucine 770 to glycine 781. 3 positions are modified to phosphoserine: serine 793, serine 875, and serine 876. A compositionally biased stretch (acidic residues) spans serine 876–proline 887. The segment at glycine 904–glycine 1070 is important for interaction with RAB8A. Residues lysine 921–glycine 1070 form the bMERB domain. Residues phenylalanine 928 to arginine 1030 are a coiled coil. Serine 1060 carries the post-translational modification Phosphoserine.

Belongs to the Mical family. Interacts with STK38 and STK38L. Associates with the SH3 domain of NEDD9. Interacts with VIM and PLXNA3. Interacts with RAB1B, RAB8A, RAB10, RAB13 and RAB15 (in their GTP-bound forms); binding to RAB1B is of low affinity compared to other Rab proteins; at least in case of RAB8A and RAB10 can bind 2 molecules of the Rab proteins simultaneously. Interacts with GRAF1/ARHGAP26, GRAF2/ARHGAP10, RAB8A, RAB8B and RAB10; may bind simultaneously to GRAFs and Rabs and connects GRAFs to Rabs. Does not interact with RAB1 and RAB11A. Requires FAD as cofactor.

Its subcellular location is the cytoplasm. It localises to the cytoskeleton. The protein resides in the endosome membrane. The protein localises to the midbody. It catalyses the reaction L-methionyl-[F-actin] + NADPH + O2 + H(+) = L-methionyl-(R)-S-oxide-[F-actin] + NADP(+) + H2O. The catalysed reaction is NADPH + O2 + H(+) = H2O2 + NADP(+). In terms of biological role, monooxygenase that promotes depolymerization of F-actin by mediating oxidation of specific methionine residues on actin to form methionine-sulfoxide, resulting in actin filament disassembly and preventing repolymerization. In the absence of actin, it also functions as a NADPH oxidase producing H(2)O(2). Acts as a cytoskeletal regulator that connects NEDD9 to intermediate filaments. Also acts as a negative regulator of apoptosis via its interaction with STK38 and STK38L; acts by antagonizing STK38 and STK38L activation by MST1/STK4. Involved in regulation of lamina-specific connectivity in the nervous system such as the development of lamina-restricted hippocampal connections. Through redox regulation of the actin cytoskeleton controls the intracellular distribution of secretory vesicles containing L1/neurofascin/NgCAM family proteins in neurons, thereby regulating their cell surface levels. May act as Rab effector protein and play a role in vesicle trafficking. Promotes endosomal tubule extension by associating with RAB8 (RAB8A or RAB8B), RAB10 and GRAF (GRAF1/ARHGAP26 or GRAF2/ARHGAP10) on the endosomal membrane which may connect GRAFs to Rabs, thereby participating in neosynthesized Rab8-Rab10-Rab11-dependent protein export. The chain is [F-actin]-monooxygenase MICAL1 (MICAL1) from Bos taurus (Bovine).